A 166-amino-acid polypeptide reads, in one-letter code: D-aminoacyl-tRNA deacylase (166 aa).

A Gly-cisPro motif, important for rejection of L-amino acids motif is present at residues 142–143 (GP).

Belongs to the DTD family. In terms of assembly, homodimer.

It is found in the cytoplasm. The enzyme catalyses glycyl-tRNA(Ala) + H2O = tRNA(Ala) + glycine + H(+). It carries out the reaction a D-aminoacyl-tRNA + H2O = a tRNA + a D-alpha-amino acid + H(+). An aminoacyl-tRNA editing enzyme that deacylates mischarged D-aminoacyl-tRNAs. Also deacylates mischarged glycyl-tRNA(Ala), protecting cells against glycine mischarging by AlaRS. Acts via tRNA-based rather than protein-based catalysis; rejects L-amino acids rather than detecting D-amino acids in the active site. By recycling D-aminoacyl-tRNA to D-amino acids and free tRNA molecules, this enzyme counteracts the toxicity associated with the formation of D-aminoacyl-tRNA entities in vivo and helps enforce protein L-homochirality. The polypeptide is D-aminoacyl-tRNA deacylase (Ralstonia nicotianae (strain ATCC BAA-1114 / GMI1000) (Ralstonia solanacearum)).